Consider the following 102-residue polypeptide: Citrate lyase acyl carrier protein (102 aa).

Ser14 bears the O-(phosphoribosyl dephospho-coenzyme A)serine mark.

It belongs to the CitD family. As to quaternary structure, oligomer with a subunit composition of (alpha,beta,gamma)6.

Its subcellular location is the cytoplasm. Covalent carrier of the coenzyme of citrate lyase. The chain is Citrate lyase acyl carrier protein from Streptococcus pyogenes serotype M2 (strain MGAS10270).